We begin with the raw amino-acid sequence, 215 residues long: Biogenesis of lysosome-related organelles complex 1 subunit 4 (215 aa).

The tract at residues 1–57 is disordered; it reads MEEGPAVGTLSREVSTEEAEPLGAAWSGDSGHVSQSHSSASGPWDDDGPEDAPGRDL. The segment covering 27–42 has biased composition (low complexity); it reads SGDSGHVSQSHSSASG. Coiled coils occupy residues 80–97 and 134–165; these read EVEA…KVDE and IDKL…LGTF. Phosphothreonine is present on Thr-164.

The protein belongs to the BLOC1S4 family. In terms of assembly, octamer composed of one copy each BLOC1S1, BLOC1S2, BLOC1S3, BLOC1S4, BLOC1S5, BLOC1S6, DTNBP1/BLOC1S7 and SNAPIN/BLOC1S8. Component of the biogenesis of lysosome-related organelles complex 1 (BLOC-1) composed of BLOC1S1, BLOC1S2, BLOC1S3, BLOC1S4, BLOC1S5, BLOC1S6, DTNBP1/BLOC1S7 and SNAPIN/BLOC1S8. The BLOC-1 complex associates with the AP-3 protein complex and membrane protein cargos. Interacts with BLOC1S5 and BLOC1S6. In terms of tissue distribution, widely expressed.

Its subcellular location is the cytoplasm. Its function is as follows. Component of the BLOC-1 complex, a complex that is required for normal biogenesis of lysosome-related organelles (LRO), such as platelet dense granules and melanosomes. In concert with the AP-3 complex, the BLOC-1 complex is required to target membrane protein cargos into vesicles assembled at cell bodies for delivery into neurites and nerve terminals. The BLOC-1 complex, in association with SNARE proteins, is also proposed to be involved in neurite extension. Plays a role in intracellular vesicle trafficking. The polypeptide is Biogenesis of lysosome-related organelles complex 1 subunit 4 (Bloc1s4) (Mus musculus (Mouse)).